The chain runs to 347 residues: Subtilase cytotoxin subunit A (347 aa).

Residues 1–21 (MLKILWTYILFLLFISASARA) form the signal peptide. Residues 24-327 (PWYFDAIGLT…GRVLNAEKAI (304 aa)) form the Peptidase S8 domain. Catalysis depends on charge relay system residues D52, H89, and S272. A disulfide bridge links C288 with C331. An A2 domain region spans residues 322-347 (NAEKAISMFCKKNYIPVRQGRMSEEL). The Prevents secretion from ER motif lies at 344-347 (SEEL).

It belongs to the peptidase S8 family. In terms of assembly, forms a complex with SubB with the stoichiometry SubA1:SubB5 (called SubAB5).

The protein localises to the secreted. It localises to the host cytoplasm. It is found in the host cytosol. Its subcellular location is the host endoplasmic reticulum lumen. Protease subunit of subtilase cytotoxin SubAB5. An endoprotease specific for host endoplasmic reticulum (ER) chaperone BiP/HSPA5, has no activity on human HSP70 or HSPA8. Cleaves between 'Leu-416' and 'Leu-417' of BiP/HSPA5 in the hinge between BiP's ATPase and protein-binding domains. This induces host ER stress response and eventual cell death. Culture supernatant of E.coli expressing both subA and subB are toxic for Vero cells (African green monkey kidney cell line), Chinese hamster ovary cells and Hct-8 cells (human colonic epithelial cell line); the subunits are not toxic individually. Purified SubAB5 is highly toxic, &lt;0.1 pg is able to kill at least 50% of 30'000 Vero cells in a microtiter plate assay after 3 days; no cytotoxicity is seen at 24 hours. Preabsorption with cells expressing a ganglioside GM2 mimic reduced cytotoxicity of SubAB5 by 93% in the Vero cytotoxicity assay. Intraperitoneal injection of 200 ng of purified SubAB5 kills mice; the higher the dose the faster the mice die. Animals injected intraperitoneally with purified SubAB5 have microvascular thrombi in the brain and other organs, including the renal tubules and glomeruli. Injection induces an unfolded response in mice. Mice fed E.coli cells expressing cloned SubAB5 experience drastic weight loss and appear ill and lethargic. Protein synthesis in Vero cells is transiently inhibited by SubAB5; both subunits are required for this effect. Inhibition of protein synthesis is prevented by brefeldin A; cells are arrested in the G1 phase. SubAB5 at 100 ng/ml induced caspase-dependent apoptosis in Vero cells through mitochondrial membrane damage. In Escherichia coli, this protein is Subtilase cytotoxin subunit A.